Here is a 159-residue protein sequence, read N- to C-terminus: Trafficking protein particle complex subunit 6A (159 aa).

Residue serine 33 is modified to Phosphoserine.

It belongs to the TRAPP small subunits family. BET3 subfamily. In terms of assembly, part of the multisubunit transport protein particle (TRAPP) complex. Heterodimer with TRAPPC3. The heterodimer TRAPPC3-TRAPPC6A interacts with TRAPPC2L. Interacts with TRAPPC2L.

The protein localises to the golgi apparatus. It is found in the cis-Golgi network. The protein resides in the endoplasmic reticulum. In terms of biological role, may play a role in vesicular transport during the biogenesis of melanosomes. This Homo sapiens (Human) protein is Trafficking protein particle complex subunit 6A.